A 94-amino-acid polypeptide reads, in one-letter code: Adaptation to cold protein J (94 aa).

The J domain occupies 3-93 (NHFSVLGIKP…AMRELWDQFY (91 aa)). The tract at residues 74 to 94 (NNVIVTDPNSAMRELWDQFYP) is essential for interaction with AtcC.

In terms of assembly, interacts via its C-terminal extension with AtcC. Does not interact with AtcA and AtcB.

Involved in cold adaptation. The J-domain is functional and can stimulate the ATPase activity of the DnaK chaperone. May work as a co-chaperone of the DnaK system to support cold resistance. This chain is Adaptation to cold protein J, found in Shewanella oneidensis (strain ATCC 700550 / JCM 31522 / CIP 106686 / LMG 19005 / NCIMB 14063 / MR-1).